Reading from the N-terminus, the 448-residue chain is Enolase (448 aa).

Position 164 (Gln-164) interacts with (2R)-2-phosphoglycerate. Glu-206 serves as the catalytic Proton donor. Residues Asp-243, Glu-289, and Asp-316 each contribute to the Mg(2+) site. Positions 341, 370, 371, and 392 each coordinate (2R)-2-phosphoglycerate. Lys-341 (proton acceptor) is an active-site residue.

Belongs to the enolase family. Mg(2+) serves as cofactor.

The protein resides in the cytoplasm. Its subcellular location is the secreted. It is found in the cell surface. The enzyme catalyses (2R)-2-phosphoglycerate = phosphoenolpyruvate + H2O. Its pathway is carbohydrate degradation; glycolysis; pyruvate from D-glyceraldehyde 3-phosphate: step 4/5. In terms of biological role, catalyzes the reversible conversion of 2-phosphoglycerate (2-PG) into phosphoenolpyruvate (PEP). It is essential for the degradation of carbohydrates via glycolysis. The chain is Enolase from Oenococcus oeni (strain ATCC BAA-331 / PSU-1).